The chain runs to 261 residues: Thiazole synthase (261 aa).

K101 (schiff-base intermediate with DXP) is an active-site residue. Residues G162, 188 to 189 (AG), and 210 to 211 (NT) each bind 1-deoxy-D-xylulose 5-phosphate.

The protein belongs to the ThiG family. In terms of assembly, homotetramer. Forms heterodimers with either ThiH or ThiS.

The protein localises to the cytoplasm. The catalysed reaction is [ThiS sulfur-carrier protein]-C-terminal-Gly-aminoethanethioate + 2-iminoacetate + 1-deoxy-D-xylulose 5-phosphate = [ThiS sulfur-carrier protein]-C-terminal Gly-Gly + 2-[(2R,5Z)-2-carboxy-4-methylthiazol-5(2H)-ylidene]ethyl phosphate + 2 H2O + H(+). It functions in the pathway cofactor biosynthesis; thiamine diphosphate biosynthesis. In terms of biological role, catalyzes the rearrangement of 1-deoxy-D-xylulose 5-phosphate (DXP) to produce the thiazole phosphate moiety of thiamine. Sulfur is provided by the thiocarboxylate moiety of the carrier protein ThiS. In vitro, sulfur can be provided by H(2)S. This Azoarcus sp. (strain BH72) protein is Thiazole synthase.